The sequence spans 230 residues: NAD(P)H-hydrate epimerase (230 aa).

One can recognise a YjeF N-terminal domain in the interval 11 to 218 (AIDVDQELFT…ALQRKYGLNL (208 aa)). Residue 61-65 (NNGGD) participates in (6S)-NADPHX binding. Residues Asn-62 and Asp-126 each coordinate K(+). (6S)-NADPHX-binding positions include 130-136 (GFSFKPP) and Asp-159. Ser-162 is a K(+) binding site.

Belongs to the NnrE/AIBP family. It depends on K(+) as a cofactor.

The catalysed reaction is (6R)-NADHX = (6S)-NADHX. The enzyme catalyses (6R)-NADPHX = (6S)-NADPHX. Catalyzes the epimerization of the S- and R-forms of NAD(P)HX, a damaged form of NAD(P)H that is a result of enzymatic or heat-dependent hydration. This is a prerequisite for the S-specific NAD(P)H-hydrate dehydratase to allow the repair of both epimers of NAD(P)HX. This Drosophila yakuba (Fruit fly) protein is NAD(P)H-hydrate epimerase.